A 72-amino-acid chain; its full sequence is Large ribosomal subunit protein uL29 (72 aa).

It belongs to the universal ribosomal protein uL29 family.

This is Large ribosomal subunit protein uL29 from Chlamydia abortus (strain DSM 27085 / S26/3) (Chlamydophila abortus).